Consider the following 518-residue polypeptide: Sodium-dependent glucose transporter 1 (518 aa).

12 helical membrane-spanning segments follow: residues 19 to 39 (TFQD…FIFV), 53 to 73 (GFLV…SATT), 82 to 102 (CKTA…IGIL), 107 to 127 (NVLI…ALHF), 139 to 159 (LAKL…SDFH), 221 to 241 (FRRA…FFFY), 307 to 327 (TSSL…IATS), 347 to 367 (YTTI…LGEM), 376 to 396 (LQGK…ASIA), 400 to 420 (LFPV…KEDR), 438 to 458 (EEEN…EMIE), and 466 to 486 (SIIE…YNQY). Positions 414–426 (RQRKEDRKSEDQK) are enriched in basic and acidic residues. Residues 414–448 (RQRKEDRKSEDQKALLSSSGLNEYEEENEEEDAEK) are disordered. Residues 436 to 448 (EYEEENEEEDAEK) show a composition bias toward acidic residues.

This sequence belongs to the major facilitator superfamily.

It localises to the apical cell membrane. In terms of biological role, may function as a sodium-dependent glucose transporter. Potential channels for urea in the inner medulla of kidney. The protein is Sodium-dependent glucose transporter 1 of Homo sapiens (Human).